The primary structure comprises 300 residues: Tyrosine recombinase XerC (300 aa).

Residues 2 to 88 enclose the Core-binding (CB) domain; sequence TQEGKLEQQF…SLRSFYTFLL (87 aa). Positions 109 to 294 constitute a Tyr recombinase domain; the sequence is RLPKFFYSEE…TKEHLKSTYM (186 aa). Catalysis depends on residues Arg150, Lys174, His246, Arg249, and His272. The active-site O-(3'-phospho-DNA)-tyrosine intermediate is Tyr281.

The protein belongs to the 'phage' integrase family. XerC subfamily. As to quaternary structure, forms a cyclic heterotetrameric complex composed of two molecules of XerC and two molecules of XerD.

It is found in the cytoplasm. Its function is as follows. Site-specific tyrosine recombinase, which acts by catalyzing the cutting and rejoining of the recombining DNA molecules. The XerC-XerD complex is essential to convert dimers of the bacterial chromosome into monomers to permit their segregation at cell division. It also contributes to the segregational stability of plasmids. The chain is Tyrosine recombinase XerC from Listeria welshimeri serovar 6b (strain ATCC 35897 / DSM 20650 / CCUG 15529 / CIP 8149 / NCTC 11857 / SLCC 5334 / V8).